Reading from the N-terminus, the 1375-residue chain is MSTQTRSGGGGGGGHARNQKKSNASNSGGGGTGHHDGVSHAAAAGKKGGQDASKTDKPEKAQPKATTEQLRIAQITNSTTEDPQINEKVLLLLTMTQRSEEEVCCALNECDYDLEAAANFLIEELPQGAFAKYEKKRKNKAANNTADGAAGDGDWADGNGNADRREKSRNRSSNRGGTRGSSDSRGWRGRETRENERNQRESREPWSGQNAGQDRGDDRANDNYRGQRNGGGRSGPGGGGRGGGFVSRSGRGGGRMGGRTGGPRGDRGSGGPGGAYGSGRGGNANEDHHEVELWDNTIAQNAEKQQQAHDDAWGDWNNEEYEGSLKDSKVFTTSNLATQSAANVVSGTGASVTAVPAAAGTEISAPPGLEHQLVQQGSHLEESSSSGPAAVTPPATLSGSATTPLLQYSAAVSNPPPQLQSQGTQSGAGTGASAAAGGGAGSTPSSFVSASPDTFSSAASAAATLVHQAQKQQQLQQQTTPIKPSATLSVEQSQYFNSLASQGVSPGSVPVQSAPAGYAQNPVAAYSQTSTSVGVSQYPNTYANVFASGTAAGAGTAEQSQQQPQIRRARVKLPPPSKIPASAVEMPGDNALNNIGYLDVQFGALDFGTDDGFEPLPEKVGSGFSIDGQQQQQQPDDYQSKSQQQQQVTLAAGLQSSQISDALNAAGYTSRSTSQQQQGVSSAVNATIDQLTKSDPYGQTGGSGNAYQNAYQSSGASKTASGFPTTAPGGYSSSTYANVQSSVANSYQQQGYGSYQPSSYQQQAGSGAQSGTGAVSGGGGTATQNIPVGGSSSQNSTSGNASSAYLTSGYSTPQSAYQSSQSVYGNTGLSNSSGFSGSASNASSQYANFSASAKLKDATTASSAAHYDSVSTSSGVSSNSGSTGNGGVVSGQTGANQAAVSNNNSVSGSSSVSNVTAGVASGNVAGVGGGVSQSGVSSGVGVPGGSASSVGVNVNNNSSSASSVGAATVAQTATGTTAAVLASLTNKNTSSSNSSGSGGSAATTTGNASGQGAGASTGGVGSSSGAGGAGSGGGSGSGLVPTNIQMVSQYIQTGLPYYQQPVYSYEELQMMQQRVPHVQGYYDLNYPPASLGAGRDNLGSVTYSAMNDGRFARTDNNSSPVGNVSSTMSQQAGSSAPMLNVPYAYFYGGNVMPGSFQYGTPAIYPQIPAANTASGQQFPKPSYSAGYGSTSYDTLSQTTQDYSKGGYSSSVNQQSKTQTVSNQSQAGTGSDLTSSMYGKGHVALNKVNSYEKQSFHSGTPPPFNMPNTQTAGGTSAQPYGMYLPMPAAGHHNMIHQPIHQVHSELPLQVVVGGGTESHVLIHGNVNGPQVTYHRIWQTEPVQCQNQLVAAHCNNFEPNIDCCVHDNNNDLSFFAD.

The interval 1–69 (MSTQTRSGGG…KAQPKATTEQ (69 aa)) is disordered. Residues 53–62 (SKTDKPEKAQ) show a composition bias toward basic and acidic residues. Positions 84 to 124 (QINEKVLLLLTMTQRSEEEVCCALNECDYDLEAAANFLIEE) constitute a UBA domain. Low complexity-rich tracts occupy residues 142–161 (ANNTADGAAGDGDWADGNGN) and 173–184 (SNRGGTRGSSDS). The interval 142-286 (ANNTADGAAG…GSGRGGNANE (145 aa)) is disordered. Residues 185–204 (RGWRGRETRENERNQRESRE) are compositionally biased toward basic and acidic residues. Residues 228–282 (RNGGGRSGPGGGGRGGGFVSRSGRGGGRMGGRTGGPRGDRGSGGPGGAYGSGRGG) are compositionally biased toward gly residues. Phosphotyrosine is present on Y321. A Phosphoserine modification is found at S324. Polar residues-rich tracts occupy residues 374–387 (VQQGSHLEESSSSG) and 395–412 (ATLSGSATTPLLQYSAAV). Disordered regions lie at residues 374–453 (VQQG…ASPD) and 613–646 (FEPLPEKVGSGFSIDGQQQQQQPDDYQSKSQQQQ). Over residues 426–441 (SGAGTGASAAAGGGAG) the composition is skewed to gly residues. Low complexity-rich tracts occupy residues 442–453 (STPSSFVSASPD) and 629–646 (QQQQQQPDDYQSKSQQQQ). At S672 the chain carries Phosphoserine. A Phosphothreonine modification is found at T673. Position 674 is a phosphoserine (S674). Low complexity predominate over residues 750-767 (QGYGSYQPSSYQQQAGSG). Disordered regions lie at residues 750–801 (QGYG…SGNA), 869–894 (SVSTSSGVSSNSGSTGNGGVVSGQTG), 987–1036 (KNTS…GGSG), 1203–1234 (SKGGYSSSVNQQSKTQTVSNQSQAGTGSDLTS), and 1251–1277 (EKQSFHSGTPPPFNMPNTQTAGGTSAQ). Residues 768–781 (AQSGTGAVSGGGGT) are compositionally biased toward gly residues. Low complexity-rich tracts occupy residues 789 to 801 (GGSSSQNSTSGNA), 869 to 882 (SVSTSSGVSSNSGS), and 987 to 1008 (KNTSSSNSSGSGGSAATTTGNA). Residues 1009-1036 (SGQGAGASTGGVGSSSGAGGAGSGGGSG) show a composition bias toward gly residues. Residues 1265 to 1277 (MPNTQTAGGTSAQ) are compositionally biased toward polar residues.

In terms of tissue distribution, at stage 11, expression is restricted to the neuroblasts, predominant in the central nervous system (CNS), including the brain and ventral nerve cord, and in the PNS. Later embryonic expression is seen in the gonads. Late third instar larvae show expression in the CNS, imaginal disks (including genital, eye-antennal, leg, wing and haltere disks), and gonads. In the larval brain, it is expressed in all of the glial cells and in clusters of neurons that projected contralaterally. In the larval ventral ganglion, it is expressed in subperineurial glia, peripheral exit glia, and a number of interneurons, but not in motor neurons. Isoform B is abundantly expressed in males and females. Isoform D is male specific and expressed at low levels.

Its subcellular location is the cytoplasm. Acts in the nervous system to mediate the control of copulatory organs during courtship. In Drosophila melanogaster (Fruit fly), this protein is Protein lingerer.